Here is a 357-residue protein sequence, read N- to C-terminus: UDP-N-acetylglucosamine--N-acetylmuramyl-(pentapeptide) pyrophosphoryl-undecaprenol N-acetylglucosamine transferase (357 aa).

Residues Thr13–Gly15, Asn122, Arg163, Ser191, and Gln288 contribute to the UDP-N-acetyl-alpha-D-glucosamine site.

The protein belongs to the glycosyltransferase 28 family. MurG subfamily.

The protein resides in the cell inner membrane. The enzyme catalyses di-trans,octa-cis-undecaprenyl diphospho-N-acetyl-alpha-D-muramoyl-L-alanyl-D-glutamyl-meso-2,6-diaminopimeloyl-D-alanyl-D-alanine + UDP-N-acetyl-alpha-D-glucosamine = di-trans,octa-cis-undecaprenyl diphospho-[N-acetyl-alpha-D-glucosaminyl-(1-&gt;4)]-N-acetyl-alpha-D-muramoyl-L-alanyl-D-glutamyl-meso-2,6-diaminopimeloyl-D-alanyl-D-alanine + UDP + H(+). It functions in the pathway cell wall biogenesis; peptidoglycan biosynthesis. Its function is as follows. Cell wall formation. Catalyzes the transfer of a GlcNAc subunit on undecaprenyl-pyrophosphoryl-MurNAc-pentapeptide (lipid intermediate I) to form undecaprenyl-pyrophosphoryl-MurNAc-(pentapeptide)GlcNAc (lipid intermediate II). The sequence is that of UDP-N-acetylglucosamine--N-acetylmuramyl-(pentapeptide) pyrophosphoryl-undecaprenol N-acetylglucosamine transferase from Gloeobacter violaceus (strain ATCC 29082 / PCC 7421).